A 913-amino-acid polypeptide reads, in one-letter code: MSRFFANGSDSESESSEEEVQASNFNKAANFQFSDDEEEVKRVVRSTKEKRYENLTSIIKTIRNHKKIKDIPNTLSSFEDLTRAYTKALPVISKEENGITPRFYIRCLAELEDFINEVWEDREGRKNLSKNNAKSLGTLRQKVRKYIKDFEEDLARFREAPDQESDVEEGEGEPHDSDGDRAGADSDDGVGAGTGKLAELPKAAKSAPTKAVADEDDSDDSIDWDSDTESETESSEDENLYQNMRERFLKRTTEKEDKDDDKRKDKRKEQKHKVRKRAEDDEDGEWETVVKGNVVEKPKMFEKDAEIDIPLVLAKLIEIMSARGKKRTDRRLQIDLLFELRDIAEQHALGTPISVKIHFNIISAIFDYNQKISEPMKLEHWALLLEVMQSMMKLLLANPDIIMNESVAEEHEEYVTAPFYIRGCPLAAVERLDDEFTKLLKECDPHSNDYVSRLKDEINVVKTIELVVQYFERCGNNNERCRIYLRKIEHLYYKFDPEVLKRKRGELPAAGTAPSSVEVMDKLCKFIYAKDDTDRIRTRAILAHIYHHAMHDNWFQARDLVLMSHLQDNIDAADPSTRILYNRMMANLGLCAFRQENIKDAHHCLVDLMVTGKPKELLAQGLLPQRQHERSAEQEKIEKQRQMPFHMHINLELLECVYLVSAMLLEIPYIAAHEFDARRRMISKTFYQQLRSSERQSLVGPPESMREHVVAAAKAMRCGNWQACANFIVNKKMNTKVWDLFYESERVREMLVKFIKEESLRTYLFTYSNVYTSISIPSLAQMYELPLPKVHSIISKMIINEELMASLDDPSETVVMHRSEPSRLQALAMQFVDKVTNLVDVNEKVFDMKQGNFFQRGNMGNRDRGYNRNQNNQGGNWGGQRRDNRNQRNRNQRGHHKQQQQQQQQQVQTIEEE.

Residues Met-1–Ala-22 are disordered. Over residues Ser-11–Val-20 the composition is skewed to acidic residues. Phosphoserine occurs at positions 34, 165, 177, and 186. The segment at Phe-157–Glu-285 is disordered. Residues Asp-162–Glu-171 show a composition bias toward acidic residues. Positions Gly-172–Ala-184 are enriched in basic and acidic residues. Over residues Asp-214–Asn-239 the composition is skewed to acidic residues. Basic and acidic residues predominate over residues Met-244–Arg-263. Over residues Lys-264–Lys-276 the composition is skewed to basic residues. Positions Phe-645–Pro-821 constitute a PCI domain. Positions Arg-856 to Glu-913 are disordered. Positions Gln-887 to Gln-898 are enriched in basic residues.

The protein belongs to the eIF-3 subunit C family. Component of the eukaryotic translation initiation factor 3 (eIF-3) complex. The eIF-3 complex interacts with pix.

It localises to the cytoplasm. Component of the eukaryotic translation initiation factor 3 (eIF-3) complex, which is involved in protein synthesis of a specialized repertoire of mRNAs and, together with other initiation factors, stimulates binding of mRNA and methionyl-tRNAi to the 40S ribosome. The eIF-3 complex specifically targets and initiates translation of a subset of mRNAs involved in cell proliferation. This chain is Eukaryotic translation initiation factor 3 subunit C, found in Drosophila mojavensis (Fruit fly).